The following is a 156-amino-acid chain: 6,7-dimethyl-8-ribityllumazine synthase (156 aa).

Residues Phe22, 57–59 (AYE), and 81–83 (TVI) contribute to the 5-amino-6-(D-ribitylamino)uracil site. 86 to 87 (GT) is a (2S)-2-hydroxy-3-oxobutyl phosphate binding site. His89 acts as the Proton donor in catalysis. Phe114 contacts 5-amino-6-(D-ribitylamino)uracil. Arg128 is a (2S)-2-hydroxy-3-oxobutyl phosphate binding site.

The protein belongs to the DMRL synthase family. In terms of assembly, forms an icosahedral capsid composed of 60 subunits, arranged as a dodecamer of pentamers.

The catalysed reaction is (2S)-2-hydroxy-3-oxobutyl phosphate + 5-amino-6-(D-ribitylamino)uracil = 6,7-dimethyl-8-(1-D-ribityl)lumazine + phosphate + 2 H2O + H(+). It functions in the pathway cofactor biosynthesis; riboflavin biosynthesis; riboflavin from 2-hydroxy-3-oxobutyl phosphate and 5-amino-6-(D-ribitylamino)uracil: step 1/2. Its function is as follows. Catalyzes the formation of 6,7-dimethyl-8-ribityllumazine by condensation of 5-amino-6-(D-ribitylamino)uracil with 3,4-dihydroxy-2-butanone 4-phosphate. This is the penultimate step in the biosynthesis of riboflavin. This Enterobacter sp. (strain 638) protein is 6,7-dimethyl-8-ribityllumazine synthase.